The sequence spans 354 residues: 3-dehydroquinate synthase (354 aa).

NAD(+) is bound by residues Asp39, Tyr45, 68–71, 100–104, 124–125, Lys136, Lys145, and 163–166; these read EKTK, GATGD, TT, and FLKT. Zn(2+) is bound by residues Glu178, His242, and His256.

It belongs to the sugar phosphate cyclases superfamily. Dehydroquinate synthase family. Requires NAD(+) as cofactor. Co(2+) is required as a cofactor. Zn(2+) serves as cofactor.

Its subcellular location is the cytoplasm. It catalyses the reaction 7-phospho-2-dehydro-3-deoxy-D-arabino-heptonate = 3-dehydroquinate + phosphate. It functions in the pathway metabolic intermediate biosynthesis; chorismate biosynthesis; chorismate from D-erythrose 4-phosphate and phosphoenolpyruvate: step 2/7. Catalyzes the conversion of 3-deoxy-D-arabino-heptulosonate 7-phosphate (DAHP) to dehydroquinate (DHQ). This chain is 3-dehydroquinate synthase, found in Staphylococcus aureus (strain MRSA252).